We begin with the raw amino-acid sequence, 557 residues long: MCGILAILNSLEEASKLRKKALSLSSRLRHRGPDWNGIYQSSDSILTHERLAIVGLENGAQPLLNEDETIALTVNGEIYNHEKLREDLVATGKHTFKTHSDCEPILHLYEDKGDDFVHMLDGDFAFVVYNKKANSFLAARDPIGVVPLYIGWHKDGSIWFSSEMKAIKDDCYKFQPFPPGHYFSSKTKEFVRYYKPNWIMGDSPSGVLKSEEQVLPAIKEAFEQAVVSRMMSDVPYGVLLSGGLDSSLVASIVSRHAEQRVEDHEKSRAWWPRIHSFCIGLKDAPDLKAARDVADYLQTVHHEYHFTVQEGIDALPDVIKHLETYDVTTIRASTPMYFLSRKIKAMGVKMVLSGEGSDEIFGGYLYFHNAPDANEFHVECCRRIKALHSFDCLRANKSTAAWGVEVRVPFLDQRFLDVAMNIDPSHKVCHDDQGKKRMEKYILRKAFETKEGEKPYLPSSVLWRQKEQFSDGVGYSWIDGLKENAENEVSDEEFAKRESYFPDDTPTTKEAFLYRKMFEAIYPGKECMETVQRWIPTWGASQDPSGRAQKVHLSTTE.

Catalysis depends on C2, which acts as the For GATase activity. The Glutamine amidotransferase type-2 domain maps to 2–188; it reads CGILAILNSL…PGHYFSSKTK (187 aa). Residues 50 to 54, 75 to 77, and D101 contribute to the L-glutamine site; these read RLAIV and NGE. Residues 217–466 form the Asparagine synthetase domain; that stretch reads AIKEAFEQAV…LPSSVLWRQK (250 aa). Residues L239, I279, and 353 to 354 contribute to the ATP site; that span reads SG. A disordered region spans residues 538-557; that stretch reads WGASQDPSGRAQKVHLSTTE.

It catalyses the reaction L-aspartate + L-glutamine + ATP + H2O = L-asparagine + L-glutamate + AMP + diphosphate + H(+). It functions in the pathway amino-acid biosynthesis; L-asparagine biosynthesis; L-asparagine from L-aspartate (L-Gln route): step 1/1. The polypeptide is Probable asparagine synthetase [glutamine-hydrolyzing] (asns) (Dictyostelium discoideum (Social amoeba)).